Consider the following 109-residue polypeptide: Iron-sulfur cluster assembly protein CyaY (109 aa).

This sequence belongs to the frataxin family.

Functionally, involved in iron-sulfur (Fe-S) cluster assembly. May act as a regulator of Fe-S biogenesis. The sequence is that of Iron-sulfur cluster assembly protein CyaY from Shewanella baltica (strain OS155 / ATCC BAA-1091).